The following is a 227-amino-acid chain: YEATS domain-containing protein 4 (227 aa).

Positions 15 to 158 (RVKGVTIVKP…AMMQQLLTTS (144 aa)) constitute a YEATS domain. A Glycyl lysine isopeptide (Lys-Gly) (interchain with G-Cter in SUMO2) cross-link involves residue lysine 37. Residues 93-97 (WGEFE) are diacetylated histone H3 binding. Positions 163–227 (LGAYKHETEF…LEEDDQAKDI (65 aa)) are interaction with MLLT10. The segment at 168 to 227 (HETEFAELEVKTREKLEAAKKKTSFEIAELKERLKASRETINCLKNEIRKLEEDDQAKDI) is interaction with TACC1. Positions 178-226 (KTREKLEAAKKKTSFEIAELKERLKASRETINCLKNEIRKLEEDDQAKD) form a coiled coil.

Component of numerous complexes with chromatin remodeling and histone acetyltransferase activity. Component of the NuA4 histone acetyltransferase complex which contains the catalytic subunit KAT5/TIP60 and the subunits EP400, TRRAP/PAF400, BRD8/SMAP, EPC1, DMAP1/DNMAP1, RUVBL1/TIP49, RUVBL2, ING3, actin, ACTL6A/BAF53A, MORF4L1/MRG15, MORF4L2/MRGX, MRGBP, YEATS4/GAS41, VPS72/YL1 and MEAF6. The NuA4 complex interacts with MYC and the adenovirus E1A protein. Component of a NuA4-related complex which contains EP400, TRRAP/PAF400, SRCAP, BRD8/SMAP, EPC1, DMAP1/DNMAP1, RUVBL1/TIP49, RUVBL2, actin, ACTL6A/BAF53A, VPS72 and YEATS4/GAS41. Interacts with MLLT10/AF10. Also interacts with the SWI/SNF component SMARCB1/BAF47, TACC1 and TACC2, and the nuclear matrix protein NUMA1. Expressed in brain, heart, kidney, liver, lung, pancreas, placenta and skeletal muscle.

It is found in the nucleus. Its function is as follows. Chromatin reader component of the NuA4 histone acetyltransferase (HAT) complex, a complex involved in transcriptional activation of select genes principally by acetylation of nucleosomal histones H4 and H2A. Specifically recognizes and binds acylated histone H3, with a preference for histone H3 diacetylated at 'Lys-18' and 'Lys-27' (H3K18ac and H3K27ac) or histone H3 diacetylated at 'Lys-14' and 'Lys-27' (H3K14ac and H3K27ac). Also able to recognize and bind crotonylated histone H3. May also recognize and bind histone H3 succinylated at 'Lys-122' (H3K122succ); additional evidences are however required to confirm this result in vivo. Plays a key role in histone variant H2AZ1/H2A.Z deposition into specific chromatin regions: recognizes and binds H3K14ac and H3K27ac on the promoters of actively transcribed genes and recruits NuA4-related complex to deposit H2AZ1/H2A.Z. H2AZ1/H2A.Z deposition is required for maintenance of embryonic stem cell. This Homo sapiens (Human) protein is YEATS domain-containing protein 4.